Consider the following 375-residue polypeptide: Serpin B5 (375 aa).

Residues Asn-99, Asn-133, Asn-188, and Asn-361 are each glycosylated (N-linked (GlcNAc...) asparagine).

Belongs to the serpin family. Ov-serpin subfamily. Interacts with IRF6. As to expression, normal mammary epithelial cells.

It localises to the secreted. The protein localises to the extracellular space. Its function is as follows. Tumor suppressor. It blocks the growth, invasion, and metastatic properties of mammary tumors. As it does not undergo the S (stressed) to R (relaxed) conformational transition characteristic of active serpins, it exhibits no serine protease inhibitory activity. The chain is Serpin B5 (SERPINB5) from Homo sapiens (Human).